The primary structure comprises 308 residues: Mu-like prophage FluMu major head subunit (308 aa).

The protein to phage Mu protein T.

This chain is Mu-like prophage FluMu major head subunit, found in Haemophilus influenzae (strain ATCC 51907 / DSM 11121 / KW20 / Rd).